The following is a 278-amino-acid chain: Bis(5'-nucleosyl)-tetraphosphatase, symmetrical (278 aa).

The protein belongs to the Ap4A hydrolase family.

It carries out the reaction P(1),P(4)-bis(5'-adenosyl) tetraphosphate + H2O = 2 ADP + 2 H(+). Functionally, hydrolyzes diadenosine 5',5'''-P1,P4-tetraphosphate to yield ADP. The protein is Bis(5'-nucleosyl)-tetraphosphatase, symmetrical of Methylococcus capsulatus (strain ATCC 33009 / NCIMB 11132 / Bath).